The sequence spans 400 residues: Leucine-rich repeat flightless-interacting protein 2 (400 aa).

Disordered stretches follow at residues 1 to 28 (MGTP…SNID) and 53 to 119 (LERQ…LSEV). The residue at position 18 (serine 18) is a Phosphoserine. The stretch at 29–71 (REAEARLAAKRAARAEARDIRMRELERQQKELDEKSDKQYAEN) forms a coiled coil. Residues 53–68 (LERQQKELDEKSDKQY) are compositionally biased toward basic and acidic residues. Residues 73–102 (TRPSSRNSASATTPLSGNSSRRVSGDTSSL) show a composition bias toward polar residues. Phosphoserine is present on residues serine 77, serine 80, serine 88, serine 92, and serine 96. Residue threonine 99 is modified to Phosphothreonine. Phosphoserine is present on residues serine 100 and serine 101. 2 coiled-coil regions span residues 106-202 (DTSL…LIEK) and 245-393 (LDVR…KANR).

Belongs to the LRRFIP family. As to quaternary structure, interacts with DVL3 and FLII. Weakly interacts with MYD88 in resting cells. Following LPS-stimulation, the interaction with MYD88 is rapidly enhanced; the complex gradually dissociates to basal levels after 6 hours of stimulation. Interaction with MYD88 is regulated by LPS-induced phosphorylation. In the presence of LPS, competes with FLII for MYD88-binding.

Functionally, may function as activator of the canonical Wnt signaling pathway, in association with DVL3, upstream of CTNNB1/beta-catenin. Positively regulates Toll-like receptor (TLR) signaling in response to agonist probably by competing with the negative FLII regulator for MYD88-binding. The sequence is that of Leucine-rich repeat flightless-interacting protein 2 (LRRFIP2) from Bos taurus (Bovine).